Consider the following 248-residue polypeptide: UPF0736 protein BCG9842_B4111 (248 aa).

It belongs to the UPF0736 family.

The polypeptide is UPF0736 protein BCG9842_B4111 (Bacillus cereus (strain G9842)).